The chain runs to 714 residues: WD repeat and coiled-coil-containing protein (714 aa).

WD repeat units follow at residues 55-98 and 154-194; these read GQFE…LEQN and KGSG…LVPC. Disordered stretches follow at residues 432 to 454 and 531 to 564; these read EESTTKSESPSQHHGIRRHSENF and QASRDSSRPCSPRYETSEKLYSDATPPKNSKEKN. Residues 567–595 adopt a coiled-coil conformation; the sequence is QLTQNMERIFTRFAEVQQCLSEIREFTQN. The segment at 685-714 is disordered; that stretch reads RSARRKSPARPPSGADDFPPESPKSPSMEK.

The polypeptide is WD repeat and coiled-coil-containing protein (wdcp) (Danio rerio (Zebrafish)).